Reading from the N-terminus, the 169-residue chain is Cytochrome c oxidase subunit 4 isoform 1, mitochondrial (169 aa).

A mitochondrion-targeting transit peptide spans 1–22 (MLATRVFSLVGKRAISTSVCVR). Residues 23–98 (AHESVVKSED…SFAEMNRGSN (76 aa)) lie on the Mitochondrial matrix side of the membrane. K29 is modified (N6-acetyllysine; alternate). K29 carries the N6-succinyllysine; alternate modification. K53 is subject to N6-acetyllysine. 2 positions are modified to phosphoserine: S56 and S58. Residue K60 is modified to N6-acetyllysine; alternate. At K60 the chain carries N6-succinyllysine; alternate. An N6-acetyllysine modification is found at K67. The chain crosses the membrane as a helical span at residues 99–124 (EWKTVVGGAMFFIGFTALVIMWQKHY). The Mitochondrial intermembrane portion of the chain corresponds to 125 to 169 (VYGPLPQSFDKEWVAKQTKRMLDMKVNPIQGLASKWDYEKNEWKK).

Belongs to the cytochrome c oxidase IV family. Component of the cytochrome c oxidase (complex IV, CIV), a multisubunit enzyme composed of 14 subunits. The complex is composed of a catalytic core of 3 subunits MT-CO1, MT-CO2 and MT-CO3, encoded in the mitochondrial DNA, and 11 supernumerary subunits COX4I1 (or COX4I2), COX5A, COX5B, COX6A1 (or COX6A2), COX6B1 (or COX6B2), COX6C, COX7A2 (or COX7A1), COX7B, COX7C, COX8A and NDUFA4, which are encoded in the nuclear genome. The complex exists as a monomer or a dimer and forms supercomplexes (SCs) in the inner mitochondrial membrane with NADH-ubiquinone oxidoreductase (complex I, CI) and ubiquinol-cytochrome c oxidoreductase (cytochrome b-c1 complex, complex III, CIII), resulting in different assemblies (supercomplex SCI(1)III(2)IV(1) and megacomplex MCI(2)III(2)IV(2)). Interacts with AFG1L. Interacts with PHB2; the interaction decreases in absence of SPHK2. Interacts with ABCB7; this interaction allows the regulation of cellular iron homeostasis and cellular reactive oxygen species (ROS) levels in cardiomyocytes. Interacts with FLVCR2; this interaction occurs in the absence of heme and is disrupted upon heme binding. Interacts with IRGC. As to expression, ubiquitous.

It localises to the mitochondrion inner membrane. It functions in the pathway energy metabolism; oxidative phosphorylation. Component of the cytochrome c oxidase, the last enzyme in the mitochondrial electron transport chain which drives oxidative phosphorylation. The respiratory chain contains 3 multisubunit complexes succinate dehydrogenase (complex II, CII), ubiquinol-cytochrome c oxidoreductase (cytochrome b-c1 complex, complex III, CIII) and cytochrome c oxidase (complex IV, CIV), that cooperate to transfer electrons derived from NADH and succinate to molecular oxygen, creating an electrochemical gradient over the inner membrane that drives transmembrane transport and the ATP synthase. Cytochrome c oxidase is the component of the respiratory chain that catalyzes the reduction of oxygen to water. Electrons originating from reduced cytochrome c in the intermembrane space (IMS) are transferred via the dinuclear copper A center (CU(A)) of subunit 2 and heme A of subunit 1 to the active site in subunit 1, a binuclear center (BNC) formed by heme A3 and copper B (CU(B)). The BNC reduces molecular oxygen to 2 water molecules using 4 electrons from cytochrome c in the IMS and 4 protons from the mitochondrial matrix. In Homo sapiens (Human), this protein is Cytochrome c oxidase subunit 4 isoform 1, mitochondrial.